The chain runs to 132 residues: Small ribosomal subunit protein uS11c (132 aa).

It belongs to the universal ribosomal protein uS11 family. In terms of assembly, part of the 30S ribosomal subunit.

The protein resides in the plastid. It is found in the chloroplast. The chain is Small ribosomal subunit protein uS11c from Cryptomeria japonica (Japanese cedar).